The following is a 553-amino-acid chain: Mucolipin-3 (553 aa).

Residues 1 to 62 (MANPEIVISS…FWARGRKPWK (62 aa)) lie on the Cytoplasmic side of the membrane. Residues 52–62 (KFWARGRKPWK) form an interaction with phosphoinositides region. Residues 63–83 (LAIQILKIAMVTIQLVLFGLS) traverse the membrane as a helical segment. The Extracellular segment spans residues 84–283 (NQMVVAFKEE…VSGSIQKNTH (200 aa)). Positions 104-118 (KGYIDRMDDTYAVYT) are extracellular/lumenal pore loop. Residue asparagine 138 is glycosylated (N-linked (GlcNAc...) asparagine). Residues cysteine 159 and cysteine 185 are joined by a disulfide bond. N-linked (GlcNAc...) asparagine glycosylation is present at asparagine 205. The cysteines at positions 238 and 269 are disulfide-linked. Residues 284-304 (NMMIFDAFVILTCLVSLILCI) form a helical membrane-spanning segment. At 305 to 341 (RSVISGLQLQQEFVNFFLLHYKKDVSVSDQMEFVNGW) the chain is on the cytoplasmic side. The chain crosses the membrane as a helical span at residues 342–362 (YIMIIISDILTIIGSILKMEI). Residues 363 to 371 (QAKSLTSYD) are Extracellular-facing. A helical transmembrane segment spans residues 372-392 (VCSILLGTSTMLVWLGVIRYL). Over 393 to 414 (GFFAKYNLLILTLQAALPNVIR) the chain is Cytoplasmic. Residues 415 to 435 (FCCCAAMIYLGYCFCGWIVLG) traverse the membrane as a helical segment. Topologically, residues 436–443 (PYHNKFRS) are extracellular. The pore-forming intramembrane region spans 444 to 464 (LNMVSECLFSLINGDDMFATF). Positions 456-459 (NGDD) match the Selectivity filter motif. Over 465–475 (AKMQQKSYLVW) the chain is Extracellular. The chain crosses the membrane as a helical span at residues 476–497 (LFSRIYLYSFISLFIYMILSLF). Topologically, residues 498–553 (IALITDTYETIKHYQQDGFPETELRTFISECKDLPNSGKFRLEDDPPVSLFCCCKK) are cytoplasmic.

The protein belongs to the transient receptor (TC 1.A.4) family. Polycystin subfamily. MCOLN3 sub-subfamily. Homotetramer. Can heterooligomerize with MCOLN1; heteromeric assemblies have different channel properties as compared to the respective homooligomers and may be tissue-specific. May heterooligomerize with TRPV5 to form a functional distinct ion channel. Interacts with GABARAPL2. Post-translationally, N-glycosylated.

It localises to the lysosome membrane. It is found in the early endosome membrane. The protein localises to the late endosome membrane. Its subcellular location is the cytoplasmic vesicle. The protein resides in the autophagosome membrane. It localises to the cell projection. It is found in the stereocilium membrane. It catalyses the reaction Ca(2+)(in) = Ca(2+)(out). The catalysed reaction is Mg(2+)(in) = Mg(2+)(out). The enzyme catalyses K(+)(in) = K(+)(out). It carries out the reaction Na(+)(in) = Na(+)(out). With respect to regulation, channel activity is activated by PtdIns(3,5)P2 (phosphatidylinositol 3,5-bisphosphate). Inhibited by lumenal H(+) and Na(+). The channel pore shows dynamic behavior and undergoes spontaneous, Ca(2+)-dependent modulation when conducting Ca(2+). Nonselective cation channel probably playing a role in the regulation of membrane trafficking events. Acts as a Ca(2+)-permeable cation channel with inwardly rectifying activity. Mediates release of Ca(2+) from endosomes to the cytoplasm, contributes to endosomal acidification and is involved in the regulation of membrane trafficking and fusion in the endosomal pathway. Also permeable to Mg(2+), Na(+) and K(+). Does not seem to act as mechanosensory transduction channel in inner ear sensory hair cells. Proposed to play a critical role at the cochlear stereocilia ankle-link region during hair-bundle growth. Involved in the regulation of autophagy. Through association with GABARAPL2 may be involved in autophagosome formation possibly providing Ca(2+) for the fusion process. Through a possible and probably tissue-specific heteromerization with MCOLN1 may be at least in part involved in many lysosome-dependent cellular events. Possible heteromeric ion channel assemblies with TRPV5 show pharmacological similarity with TRPML3. The chain is Mucolipin-3 from Callithrix jacchus (White-tufted-ear marmoset).